The following is a 121-amino-acid chain: Large ribosomal subunit protein uL14 (121 aa).

The protein belongs to the universal ribosomal protein uL14 family. In terms of assembly, part of the 50S ribosomal subunit. Forms a cluster with proteins L3 and L19. In the 70S ribosome, L14 and L19 interact and together make contacts with the 16S rRNA in bridges B5 and B8.

Binds to 23S rRNA. Forms part of two intersubunit bridges in the 70S ribosome. This Phocaeicola vulgatus (strain ATCC 8482 / DSM 1447 / JCM 5826 / CCUG 4940 / NBRC 14291 / NCTC 11154) (Bacteroides vulgatus) protein is Large ribosomal subunit protein uL14.